The chain runs to 210 residues: Tetraspanin-31 (210 aa).

The Cytoplasmic segment spans residues 1 to 12; that stretch reads MVCGGFACSKNA. Residues 13-33 traverse the membrane as a helical segment; sequence LCALNVVYMLVGLLLIGVAAW. The Extracellular portion of the chain corresponds to 34-44; the sequence is AKGLGLVSSIH. Residues 45–65 form a helical membrane-spanning segment; the sequence is IIGGVIAVGVFLLLIAVAGLV. Topologically, residues 66–72 are cytoplasmic; the sequence is GAVNHHQ. Residues 73-93 form a helical membrane-spanning segment; that stretch reads VLLFFYMIILGLVFIFQFGIS. Over 94-173 the chain is Extracellular; that stretch reads CSCLAINLSK…FLKHSDEALK (80 aa). N-linked (GlcNAc...) asparagine glycosylation is found at Asn-100, Asn-109, Asn-117, and Asn-134. Residues 174 to 194 traverse the membrane as a helical segment; sequence ILGGVGLFFSFTEILGVWLAM. The Cytoplasmic portion of the chain corresponds to 195–210; it reads RFRNQKDPRANPSAFL.

Belongs to the tetraspanin (TM4SF) family.

The protein localises to the membrane. This chain is Tetraspanin-31 (TSPAN31), found in Bos taurus (Bovine).